The chain runs to 306 residues: uncharacterized protein (306 aa).

Residue Y51 is the Proton donor of the active site. 197-207 (GPVAKGLLTEK) lines the NADP(+) pocket.

Belongs to the aldo/keto reductase family. Aldo/keto reductase 2 subfamily.

This is an uncharacterized protein from Bacillus subtilis (strain 168).